A 103-amino-acid chain; its full sequence is Large ribosomal subunit protein bL21 (103 aa).

This sequence belongs to the bacterial ribosomal protein bL21 family. As to quaternary structure, part of the 50S ribosomal subunit. Contacts protein L20.

Functionally, this protein binds to 23S rRNA in the presence of protein L20. The polypeptide is Large ribosomal subunit protein bL21 (Brevibacillus brevis (strain 47 / JCM 6285 / NBRC 100599)).